An 80-amino-acid polypeptide reads, in one-letter code: Toxin Acra I-3 (80 aa).

Residues 1 to 22 form the signal peptide; that stretch reads MMKLVLLSVIVILFSLIGSIHG. The LCN-type CS-alpha/beta domain maps to 25-80; sequence VPGNYPLDSSGNKYPCTVLGDNQSCIDVCKKHGVKYGYCYGFKCWCEYLKDKNVSL. Intrachain disulfides connect cysteine 40-cysteine 63, cysteine 49-cysteine 68, and cysteine 53-cysteine 70.

This sequence belongs to the long (3 C-C) scorpion toxin superfamily. Sodium/Potassium channel inhibitor family. As to expression, expressed by the venom gland.

Its subcellular location is the secreted. Its function is as follows. Probable neurotoxin that inhibits ion channels. Is toxic to mice. In Androctonus crassicauda (Arabian fat-tailed scorpion), this protein is Toxin Acra I-3.